We begin with the raw amino-acid sequence, 247 residues long: Carboxy-S-adenosyl-L-methionine synthase (247 aa).

S-adenosyl-L-methionine is bound by residues Tyr-39, 64 to 66, 89 to 90, 117 to 118, Asn-132, and Arg-199; these read GCS, DN, and DI.

The protein belongs to the class I-like SAM-binding methyltransferase superfamily. Cx-SAM synthase family. Homodimer.

It carries out the reaction prephenate + S-adenosyl-L-methionine = carboxy-S-adenosyl-L-methionine + 3-phenylpyruvate + H2O. In terms of biological role, catalyzes the conversion of S-adenosyl-L-methionine (SAM) to carboxy-S-adenosyl-L-methionine (Cx-SAM). The sequence is that of Carboxy-S-adenosyl-L-methionine synthase from Escherichia coli O7:K1 (strain IAI39 / ExPEC).